We begin with the raw amino-acid sequence, 630 residues long: Low affinity heme transporter str3 (630 aa).

A compositionally biased stretch (basic and acidic residues) spans 1-26 (MEAKETHSISDHEVELQDAKPEEKSE). Residues 1-51 (MEAKETHSISDHEVELQDAKPEEKSENGNFVFEKAFSSDEEKGSGYNTNET) form a disordered region. At 1-79 (MEAKETHSIS…VRDSIYQNKR (79 aa)) the chain is on the cytoplasmic side. S10 and S38 each carry phosphoserine. A helical membrane pass occupies residues 80-100 (GMYLAYAFGIAILACSWASAI). Over 101-120 (QSSTTYSYQVYATASFNRTS) the chain is Extracellular. A helical membrane pass occupies residues 121 to 141 (MISTLEIATAIISSVCKPILG). Residues 142 to 154 (KFSDITSRPMTYT) lie on the Cytoplasmic side of the membrane. A helical membrane pass occupies residues 155 to 175 (LVLLFYVIGFIVVASSSTISA). Position 176 (Y176) is a topological domain, extracellular. The helical transmembrane segment at 177–197 (VIGSVFISIGSSGLDYLNTLV) threads the bilayer. Residues 198 to 208 (VGDLTSLKWRG) are Cytoplasmic-facing. A helical transmembrane segment spans residues 209–229 (FMTALLSTPYIATVWFTGFIV). Topologically, residues 230–241 (QGIIDSNWRWGY) are extracellular. A helical transmembrane segment spans residues 242–262 (GMFAIIMPAVMTPAVIILMYL). Topologically, residues 263 to 302 (ERQANKDENIKKIINYQTEEKNKNKQSKWQKLWKAVLEVD) are cytoplasmic. The chain crosses the membrane as a helical span at residues 303-323 (LFGLILLGVGWSILLLPFSLT). Residues 324–335 (SYAKNGWKNPSM) lie on the Extracellular side of the membrane. The helical transmembrane segment at 336–356 (IAMMVVGGVILIAYSGYEMFI) threads the bilayer. Residues 357–370 (APYPSCPRRVMNRT) lie on the Cytoplasmic side of the membrane. The helical transmembrane segment at 371-391 (FITAVIIDFFYYLAGYLQSMY) threads the bilayer. Over 392 to 406 (FTTYTWILYDWSYRD) the chain is Extracellular. A helical transmembrane segment spans residues 407 to 427 (WTYFNNTMTIALCVFGVFAGA). The Cytoplasmic portion of the chain corresponds to 428-439 (MHRVFHRYKYLQ). Residues 440–460 (IIGLVIKIVGYGILIRPNFAA) traverse the membrane as a helical segment. Residues 461–465 (TGKVD) lie on the Extracellular side of the membrane. A helical transmembrane segment spans residues 466-486 (LAWSLILIGMGGSFSVVGSQV). Residues 487-502 (SCQASVPHQDLAIASS) are Cytoplasmic-facing. Residues 503–523 (LLPLYTNIGGAIGAAIASPIF) traverse the membrane as a helical segment. The segment at 522–576 (IFSNKVPKYLREYLPSSINDTQVYNFYSDSSLIREYPVGTEIRDGAIKAYSRSMF) is heme binding. The Extracellular portion of the chain corresponds to 524-574 (SNKVPKYLREYLPSSINDTQVYNFYSDSSLIREYPVGTEIRDGAIKAYSRS). The chain crosses the membrane as a helical span at residues 575–595 (MFFLLVPAVSLSFIPLAAAFW). Over 596–630 (QSNFYLGNQQNAVEGDQDHKKKGDKETTQEEKIII) the chain is Cytoplasmic. The interval 610–630 (GDQDHKKKGDKETTQEEKIII) is disordered. Residues 611–630 (DQDHKKKGDKETTQEEKIII) show a composition bias toward basic and acidic residues.

The protein belongs to the major facilitator superfamily.

The protein localises to the cell membrane. In terms of biological role, low affinity heme transporter involved in the assimilation of exogenous heme during conditions of low cellular iron. The sequence is that of Low affinity heme transporter str3 from Schizosaccharomyces pombe (strain 972 / ATCC 24843) (Fission yeast).